The sequence spans 99 residues: Ragulator complex protein LAMTOR4 (99 aa).

Position 1 is an N-acetylmethionine (Met-1). Thr-2 is subject to N-acetylthreonine; in Ragulator complex protein LAMTOR4, N-terminally processed. Ser-67 carries the phosphoserine; by PKA modification.

This sequence belongs to the LAMTOR4 family. In terms of assembly, part of the Ragulator complex composed of LAMTOR1, LAMTOR2, LAMTOR3, LAMTOR4 and LAMTOR5. LAMTOR4 and LAMTOR5 form a heterodimer that interacts, through LAMTOR1, with a LAMTOR2, LAMTOR3 heterodimer. The Ragulator complex interacts with both the mTORC1 complex and heterodimers constituted of the Rag GTPases RagA/RRAGA, RagB/RRAGB, RagC/RRAGC and RagD/RRAGD; regulated by amino acid availability. The Ragulator complex interacts with SLC38A9; the probable amino acid sensor. Component of the lysosomal folliculin complex (LFC), composed of FLCN, FNIP1 (or FNIP2), RagA/RRAGA or RagB/RRAGB GDP-bound, RagC/RRAGC or RagD/RRAGD GTP-bound, and Ragulator. Phosphorylation at Ser-67 by PKA inhibits Ragulator complex assembly.

The protein resides in the lysosome. As part of the Ragulator complex it is involved in amino acid sensing and activation of mTORC1, a signaling complex promoting cell growth in response to growth factors, energy levels, and amino acids. Activated by amino acids through a mechanism involving the lysosomal V-ATPase, the Ragulator plays a dual role for the small GTPases Rag (RagA/RRAGA, RagB/RRAGB, RagC/RRAGC and/or RagD/RRAGD): it (1) acts as a guanine nucleotide exchange factor (GEF), activating the small GTPases Rag and (2) mediates recruitment of Rag GTPases to the lysosome membrane. Activated Ragulator and Rag GTPases function as a scaffold recruiting mTORC1 to lysosomes where it is in turn activated. This Homo sapiens (Human) protein is Ragulator complex protein LAMTOR4.